The following is a 316-amino-acid chain: MGLQTTKKITPFLTFDRQQWAKLRKSVPLKLTEQDLKPLLSFNEELSLEEVSTIYLPLARLINYYIEENIKRQTVLHRFLGVKSPKVPYIISLAGSVSVGKSTSARILQALLCQWPVERKVDLITTDGFLYPLAILQAKNLLNRKGFPESYDIHRLIKFVSDLKSGERNIKAPIYSHLTYDIIPDRYSVVDQPEIVILEGLNVLQSGMNYPSSPHNVFVSDFVDFSIYVDADEALLKSWYIHRFLKFRCSAFSDPNSYFHHYAKLSEEQAVKTATTIWDEINGLNLKQNIVPSRERADLILVKGEDHAIQTVKLRK.

95–102 is a binding site for ATP; the sequence is GSVSVGKS.

This sequence belongs to the prokaryotic pantothenate kinase family.

The protein localises to the cytoplasm. It catalyses the reaction (R)-pantothenate + ATP = (R)-4'-phosphopantothenate + ADP + H(+). It functions in the pathway cofactor biosynthesis; coenzyme A biosynthesis; CoA from (R)-pantothenate: step 1/5. This is Pantothenate kinase from Haemophilus ducreyi (strain 35000HP / ATCC 700724).